The chain runs to 144 residues: UPF0735 ACT domain-containing protein NT01CX_1681 (144 aa).

An ACT domain is found at 68–143; the sequence is TIGFLLSHKA…NVVKVSLIAM (76 aa).

The protein belongs to the UPF0735 family.

This Clostridium novyi (strain NT) protein is UPF0735 ACT domain-containing protein NT01CX_1681.